A 184-amino-acid chain; its full sequence is Dirigent protein 13 (184 aa).

Residues 1–25 (MANQIYIISLIFLSVLLYQSTTVLS) form the signal peptide. An intrachain disulfide couples C36 to C182. Residues N55 and N119 are each glycosylated (N-linked (GlcNAc...) asparagine).

Belongs to the plant dirigent protein family. As to quaternary structure, homodimer. Expressed in root vasculature and meristems, cotyledons, flowers, siliques, and leaf trichomes. Localized in the interfascicular/vascular cambia and developing xylem.

It is found in the secreted. The protein localises to the extracellular space. It localises to the apoplast. Its function is as follows. Dirigent proteins impart stereoselectivity on the phenoxy radical-coupling reaction, yielding optically active lignans from two molecules of coniferyl alcohol in the biosynthesis of lignans, flavonolignans, and alkaloids and thus plays a central role in plant secondary metabolism. The polypeptide is Dirigent protein 13 (DIR13) (Arabidopsis thaliana (Mouse-ear cress)).